Here is a 238-residue protein sequence, read N- to C-terminus: Probable transcriptional regulatory protein SpyM51586 (238 aa).

The protein belongs to the TACO1 family. YeeN subfamily.

Its subcellular location is the cytoplasm. The polypeptide is Probable transcriptional regulatory protein SpyM51586 (Streptococcus pyogenes serotype M5 (strain Manfredo)).